We begin with the raw amino-acid sequence, 191 residues long: Corrinoid adenosyltransferase (191 aa).

ATP-binding positions include 10–18 (TRTGDNGTT), K28, 140–145 (RRAERS), and N166.

Belongs to the Cob(I)alamin adenosyltransferase family.

Its subcellular location is the cytoplasm. The enzyme catalyses 2 cob(II)yrinate a,c diamide + reduced [electron-transfer flavoprotein] + 2 ATP = 2 adenosylcob(III)yrinate a,c-diamide + 2 triphosphate + oxidized [electron-transfer flavoprotein] + 3 H(+). It carries out the reaction 2 cob(II)alamin + reduced [electron-transfer flavoprotein] + 2 ATP = 2 adenosylcob(III)alamin + 2 triphosphate + oxidized [electron-transfer flavoprotein] + 3 H(+). It participates in cofactor biosynthesis; adenosylcobalamin biosynthesis; adenosylcobalamin from cob(II)yrinate a,c-diamide: step 2/7. This is Corrinoid adenosyltransferase from Mycobacterium leprae (strain TN).